A 223-amino-acid polypeptide reads, in one-letter code: Glycoprotein 42 (223 aa).

Over 1 to 8 the chain is Intravirion; that stretch reads MVSFKQVR. Residues 9–29 form a helical membrane-spanning segment; the sequence is VPLFTAIALVIVLLLAYFLPP. Over 30-223 the chain is Virion surface; sequence RVRGGGRVAA…CLCVSQRSNS (194 aa). Cystine bridges form between Cys-99-Cys-138, Cys-102-Cys-115, Cys-128-Cys-214, Cys-132-Cys-216, and Cys-192-Cys-208. The C-type lectin domain occupies 111 to 217; it reads YKGCCFYFTK…CSFLKPCLCV (107 aa).

This sequence belongs to the epstein barr virus gp42 family. In terms of assembly, forms a complex with gp25 and gp85 via its N-terminus; this complex is used for invasion of B-lymphocytes. Interacts with human HLA-DRA and HLA-DRB1.

The protein localises to the virion membrane. It is found in the host membrane. Plays a role in virion attachment to host B-lymphocytes, through binding to leukocyte antigen (HLA) class II and subsequently participates in fusion of the virion with host membranes. May act as a tropism switch that directs fusion with B-lymphocytes and inhibits fusion with epithelial cells. Additionally, hampers T-cell recognition via HLA class II molecules through steric hindrance of T-cell receptor-class II-peptide interaction. Its function is as follows. Soluble gp42 inhibits HLA class II-restricted antigen presentation to T-cells through binding to immature and mature HLA class II complexes. The protein is Glycoprotein 42 of Epstein-Barr virus (strain B95-8) (HHV-4).